Here is a 682-residue protein sequence, read N- to C-terminus: Potassium-transporting ATPase ATP-binding subunit (682 aa).

Helical transmembrane passes span 34–54 (PVMF…LAMV), 58–78 (IAGS…TVLF), 219–239 (IALT…TATL), and 254–274 (VLVA…LSAI). The 4-aspartylphosphate intermediate role is filled by aspartate 307. Residues aspartate 344, glutamate 348, 377-384 (FTAQSRMS), and lysine 395 contribute to the ATP site. Positions 518 and 522 each coordinate Mg(2+). Helical transmembrane passes span 588–608 (FAII…LNVM), 616–636 (AILS…PLAL), and 662–682 (LVVP…LGLA).

It belongs to the cation transport ATPase (P-type) (TC 3.A.3) family. Type IA subfamily. As to quaternary structure, the system is composed of three essential subunits: KdpA, KdpB and KdpC.

The protein localises to the cell inner membrane. The catalysed reaction is K(+)(out) + ATP + H2O = K(+)(in) + ADP + phosphate + H(+). Part of the high-affinity ATP-driven potassium transport (or Kdp) system, which catalyzes the hydrolysis of ATP coupled with the electrogenic transport of potassium into the cytoplasm. This subunit is responsible for energy coupling to the transport system and for the release of the potassium ions to the cytoplasm. This is Potassium-transporting ATPase ATP-binding subunit from Salmonella typhimurium (strain LT2 / SGSC1412 / ATCC 700720).